Reading from the N-terminus, the 627-residue chain is Chaperone protein HtpG (627 aa).

Residues 1–339 (MKGQETRGFQ…SNDLPLNVSR (339 aa)) form an a; substrate-binding region. Residues 340–555 (EILQDSRVTQ…ADEMSTQMAK (216 aa)) are b. The segment at 556–627 (LFAAAGQQAP…IRRMNQLLSA (72 aa)) is c.

It belongs to the heat shock protein 90 family. As to quaternary structure, homodimer.

It is found in the cytoplasm. In terms of biological role, molecular chaperone. Has ATPase activity. The sequence is that of Chaperone protein HtpG from Pectobacterium atrosepticum (strain SCRI 1043 / ATCC BAA-672) (Erwinia carotovora subsp. atroseptica).